A 156-amino-acid polypeptide reads, in one-letter code: ATP synthase subunit b (156 aa).

The helical transmembrane segment at 7-27 (LIGQTVAFIIFVWFCMKFVWP) threads the bilayer.

It belongs to the ATPase B chain family. F-type ATPases have 2 components, F(1) - the catalytic core - and F(0) - the membrane proton channel. F(1) has five subunits: alpha(3), beta(3), gamma(1), delta(1), epsilon(1). F(0) has three main subunits: a(1), b(2) and c(10-14). The alpha and beta chains form an alternating ring which encloses part of the gamma chain. F(1) is attached to F(0) by a central stalk formed by the gamma and epsilon chains, while a peripheral stalk is formed by the delta and b chains.

Its subcellular location is the cell inner membrane. In terms of biological role, f(1)F(0) ATP synthase produces ATP from ADP in the presence of a proton or sodium gradient. F-type ATPases consist of two structural domains, F(1) containing the extramembraneous catalytic core and F(0) containing the membrane proton channel, linked together by a central stalk and a peripheral stalk. During catalysis, ATP synthesis in the catalytic domain of F(1) is coupled via a rotary mechanism of the central stalk subunits to proton translocation. Its function is as follows. Component of the F(0) channel, it forms part of the peripheral stalk, linking F(1) to F(0). The chain is ATP synthase subunit b from Shewanella oneidensis (strain ATCC 700550 / JCM 31522 / CIP 106686 / LMG 19005 / NCIMB 14063 / MR-1).